Reading from the N-terminus, the 297-residue chain is Large ribosomal subunit protein uL18 (297 aa).

Gly-2 bears the N-acetylglycine mark. N6-acetyllysine is present on residues Lys-5 and Lys-48. Position 185 is a phosphoserine (Ser-185). An N6-acetyllysine; alternate modification is found at Lys-220. Lys-220 participates in a covalent cross-link: Glycyl lysine isopeptide (Lys-Gly) (interchain with G-Cter in SUMO1); alternate. Lys-220 participates in a covalent cross-link: Glycyl lysine isopeptide (Lys-Gly) (interchain with G-Cter in SUMO2); alternate. Thr-232 is subject to Phosphothreonine. The interval 253–297 (YEKKPKREVKKKRWNRPKMSLAQKKDRVAQKKASFLRAQERAAES) is disordered. Positions 258 to 268 (KREVKKKRWNR) are enriched in basic residues. Position 272 is a phosphoserine (Ser-272).

The protein belongs to the universal ribosomal protein uL18 family. In terms of assembly, component of the large ribosomal subunit (LSU). Part of the 5S RNP complex, which is a LSU subcomplex composed of the 5S RNA, RPL5 and RPL11. Component of a hexameric 5S RNP precursor complex, composed of 5S RNA, RRS1, RPF2/BXDC1, RPL5, RPL11 and HEATR3; this complex acts as a precursor for ribosome assembly. Interacts with isoform 1 of NVL in an ATP-dependent manner. Interacts with RRP1B. Interacts with IPO5, IPO7 and KPNB1; these interactions may be involved in RPL5 nuclear import for the assembly of ribosomal subunits.

It localises to the cytoplasm. Its subcellular location is the nucleus. The protein resides in the nucleolus. Component of the ribosome, a large ribonucleoprotein complex responsible for the synthesis of proteins in the cell. The small ribosomal subunit (SSU) binds messenger RNAs (mRNAs) and translates the encoded message by selecting cognate aminoacyl-transfer RNA (tRNA) molecules. The large subunit (LSU) contains the ribosomal catalytic site termed the peptidyl transferase center (PTC), which catalyzes the formation of peptide bonds, thereby polymerizing the amino acids delivered by tRNAs into a polypeptide chain. The nascent polypeptides leave the ribosome through a tunnel in the LSU and interact with protein factors that function in enzymatic processing, targeting, and the membrane insertion of nascent chains at the exit of the ribosomal tunnel. As part of the 5S RNP/5S ribonucleoprotein particle it is an essential component of the LSU, required for its formation and the maturation of rRNAs. It also couples ribosome biogenesis to p53/TP53 activation. As part of the 5S RNP it accumulates in the nucleoplasm and inhibits MDM2, when ribosome biogenesis is perturbed, mediating the stabilization and the activation of TP53. The sequence is that of Large ribosomal subunit protein uL18 (RPL5) from Oryctolagus cuniculus (Rabbit).